The chain runs to 245 residues: Rhamnosyl O-methyltransferase (245 aa).

Positions 1-38 (MGLVWRSRTSLVGQLIGLVRLVASFAAQLFYRPSDAVA) are cleaved as a signal peptide.

The protein belongs to the rhamnosyl O-methyltransferase family.

In terms of biological role, catalyzes the O-methylation of the hydroxyl group located on C-2 of the first rhamnosyl residue linked to the phenolic group of glycosylated phenolphthiocerol dimycocerosates (PGL) and p-hydroxybenzoic acid derivatives (p-HBAD). The chain is Rhamnosyl O-methyltransferase from Mycobacterium bovis (strain ATCC BAA-935 / AF2122/97).